Consider the following 96-residue polypeptide: Protein Vpr (96 aa).

A homooligomerization region spans residues 1–42; sequence MEQAPEDQGPQREPYNEWTLELLEELKSEAVRHFPRLWLHSL. Phosphoserine; by host occurs at positions 79, 94, and 96.

It belongs to the HIV-1 VPR protein family. In terms of assembly, homooligomer, may form homodimer. Interacts with p6-gag region of the Pr55 Gag precursor protein through a (Leu-X-X)4 motif near the C-terminus of the P6gag protein. Interacts with host UNG. May interact with host RAD23A/HHR23A. Interacts with host VPRBP/DCAF1, leading to hijack the CUL4A-RBX1-DDB1-DCAF1/VPRBP complex, mediating ubiquitination of host proteins such as TERT and ZGPAT and arrest of the cell cycle in G2 phase. Phosphorylated on several residues by host. These phosphorylations regulate VPR activity for the nuclear import of the HIV-1 pre-integration complex.

The protein localises to the virion. Its subcellular location is the host nucleus. The protein resides in the host extracellular space. Functionally, during virus replication, may deplete host UNG protein, and incude G2-M cell cycle arrest. Acts by targeting specific host proteins for degradation by the 26S proteasome, through association with the cellular CUL4A-DDB1 E3 ligase complex by direct interaction with host VPRPB/DCAF-1. Cell cycle arrest reportedly occurs within hours of infection and is not blocked by antiviral agents, suggesting that it is initiated by the VPR carried into the virion. Additionally, VPR induces apoptosis in a cell cycle dependent manner suggesting that these two effects are mechanistically linked. Detected in the serum and cerebrospinal fluid of AIDS patient, VPR may also induce cell death to bystander cells. In terms of biological role, during virus entry, plays a role in the transport of the viral pre-integration (PIC) complex to the host nucleus. This function is crucial for viral infection of non-dividing macrophages. May act directly at the nuclear pore complex, by binding nucleoporins phenylalanine-glycine (FG)-repeat regions. This chain is Protein Vpr, found in Human immunodeficiency virus type 1 group M subtype B (isolate RF/HAT3) (HIV-1).